The following is a 1784-amino-acid chain: Protein mel-28 (1784 aa).

Residues 1–956 form a required for nuclear envelope and kinetochore localization region; it reads MDNENSSIFK…QNDDEDMPEV (956 aa). A required for association with mitotic chromosomes region spans residues 566 to 778; the sequence is GKIEEFCQLA…TSPEDSEHSE (213 aa). Residues 846-1071 form an important for nuclear localization region; sequence APMTVTIGKH…HNSILKTAKG (226 aa). Disordered regions lie at residues 945-994 and 1115-1784; these read KVQN…AKRI and ETMT…RAKQ. Residues 1126–1149 show a composition bias toward basic and acidic residues; it reads GKHDEEKDSEKNVVDEMEEVKDQE. 2 stretches are compositionally biased toward acidic residues: residues 1222 to 1232 and 1266 to 1278; these read LEEEGEDEDIW and VNEEEVVESEEVQ. Residues 1239 to 1601 form a chromatin binding region; the sequence is FEVQMDEDCE…TTVDPSSSAL (363 aa). Positions 1279 to 1293 are enriched in basic and acidic residues; it reads QDAKEPEKTEKRQEE. Over residues 1297–1306 the composition is skewed to low complexity; the sequence is EVMQPVIPEE. A compositionally biased stretch (acidic residues) spans 1321 to 1336; it reads ELQEEPDIVPTGDEDT. Positions 1337–1351 are enriched in basic and acidic residues; sequence ADKVQEQAVEEDRPP. A compositionally biased stretch (polar residues) spans 1352 to 1366; the sequence is SRNTRSSSVQKSTSQ. Residues 1367-1382 show a composition bias toward basic and acidic residues; that stretch reads VEDRDPKELVEEERPP. A compositionally biased stretch (polar residues) spans 1383-1398; sequence SRNTRSASVQKSSNQE. The span at 1428–1444 shows a compositional bias: basic and acidic residues; that stretch reads KVKDQKPEELIEEDRPP. Polar residues predominate over residues 1445 to 1459; sequence SRNTRSASAQKTVAA. The segment covering 1533–1546 has biased composition (low complexity); the sequence is AAASTSSSRAGSVT. Positions 1566-1576 are enriched in acidic residues; sequence VQEEEEEEAEE. Residues 1581-1606 show a composition bias toward polar residues; it reads SRSTRSASVKNTTVDPSSSALASTKR. The interval 1601 to 1784 is important for nuclear localization; it reads LASTKRTTSR…LLRSARRAKQ (184 aa). The a.T hook 1 DNA-binding region spans 1630 to 1642; it reads TPKRGRPAKKDAG. Residues 1630 to 1784 form a required for chromosome segregation, nuclear growth, nucleoplasmic accumulation and cell cycle timing, but not required for nuclear envelope and kinetochore localization region; it reads TPKRGRPAKK…LLRSARRAKQ (155 aa). Over residues 1716 to 1735 the composition is skewed to polar residues; the sequence is AGTSKQSRSVTRSRASSIDV. The segment at residues 1746–1758 is a DNA-binding region (a.T hook 2); the sequence is KRGRGRPPKTVLE.

Ubiquitously expressed (at protein level).

The protein resides in the nucleus. Its subcellular location is the nucleoplasm. The protein localises to the nucleus envelope. It localises to the nucleus inner membrane. It is found in the nuclear pore complex. The protein resides in the chromosome. Its subcellular location is the centromere. The protein localises to the kinetochore. Functionally, nuclear envelope protein which has essential roles in assembly of nuclear pore complexes and in chromatin maintenance during the cell cycle. Appears to be a stable structural component of the nuclear envelope during interphase. In dividing cells, localizes to kinetochores during early stages of mitosis and then to chromatin during late mitosis. Important for several mitotic processes including chromosome condensation, kinetochore assembly, chromosome segregation and cell-cycle timing. In postmitotic cells, plays a role in the early steps of nuclear pore complex assembly by recruiting the nucleoporins npp-10 and npp-5 to chromatin. Also involved in meiotic chromosome segregation. May function downstream of the Ran GTPase signaling pathway. This is Protein mel-28 from Caenorhabditis elegans.